We begin with the raw amino-acid sequence, 148 residues long: Large-conductance mechanosensitive channel (148 aa).

A run of 2 helical transmembrane segments spans residues 14 to 34 (VVDM…INTL) and 85 to 105 (GIFV…FLSV).

Belongs to the MscL family. In terms of assembly, homopentamer.

It is found in the cell inner membrane. Functionally, channel that opens in response to stretch forces in the membrane lipid bilayer. May participate in the regulation of osmotic pressure changes within the cell. The sequence is that of Large-conductance mechanosensitive channel from Chlorobium phaeobacteroides (strain DSM 266 / SMG 266 / 2430).